Reading from the N-terminus, the 168-residue chain is Urease accessory protein UreE (168 aa).

The segment at 145-168 is disordered; that stretch reads EGGAYAAGQGGGHGPHGQHTHPHH.

It belongs to the UreE family.

The protein resides in the cytoplasm. Involved in urease metallocenter assembly. Binds nickel. Probably functions as a nickel donor during metallocenter assembly. In Verminephrobacter eiseniae (strain EF01-2), this protein is Urease accessory protein UreE.